The primary structure comprises 268 residues: Small ribosomal subunit protein uS2 (268 aa).

It belongs to the universal ribosomal protein uS2 family.

This is Small ribosomal subunit protein uS2 from Caulobacter vibrioides (strain ATCC 19089 / CIP 103742 / CB 15) (Caulobacter crescentus).